A 303-amino-acid chain; its full sequence is Sulfotransferase 6B1 (303 aa).

Lys65–Trp70 lines the 3'-phosphoadenylyl sulfate pocket. His118 serves as the catalytic Proton acceptor. 3'-phosphoadenylyl sulfate-binding positions include Arg140, Ser148, Tyr203, Ser237–Met242, and Arg259–Gly261.

It belongs to the sulfotransferase 1 family.

It is found in the cytoplasm. The protein localises to the cytosol. It catalyses the reaction thyroxine + 3'-phosphoadenylyl sulfate = thyroxine sulfate + adenosine 3',5'-bisphosphate + H(+). Functionally, sulfotransferase that utilizes 3'-phospho-5'-adenylyl sulfate (PAPS) as sulfonate donor to catalyze the sulfate conjugation of thyroxine. Involved in the metabolism of thyroxine. The chain is Sulfotransferase 6B1 (SULT6B1) from Pan troglodytes (Chimpanzee).